The following is a 2054-amino-acid chain: Multiple PDZ domain protein (2054 aa).

Residues 3–63 (ETIDKNRALQ…SLQQLKDQVN (61 aa)) enclose the L27 domain. The PDZ 1 domain maps to 138–225 (IFELLKPPCG…TIQLVIARGS (88 aa)). Ser-231 is subject to Phosphoserine. PDZ domains lie at 258–338 (TIEL…ARGA), 377–463 (DVEL…MRKG), 545–626 (VAHV…CRRT), and 692–778 (AIEL…VAKP). A phosphoserine mark is found at Ser-782 and Ser-1065. One can recognise a PDZ 6 domain in the interval 995–1076 (TVTIAKGSSS…IGPDIKITYV (82 aa)). A disordered region spans residues 1110–1129 (PELPEREEGEGEESELQNAA). Positions 1138–1230 (RVELWREPSK…PVVFMVQSIV (93 aa)) constitute a PDZ 7 domain. The residue at position 1157 (Arg-1157) is an Omega-N-methylarginine. The span at 1261-1273 (LQLTSDKAPSQSE) shows a compositional bias: polar residues. Positions 1261 to 1312 (LQLTSDKAPSQSESESEKATLCSVPSSSPSVFSEMSSDYAQPSATTVAEDED) are disordered. Positions 1283-1297 (SVPSSSPSVFSEMSS) are enriched in low complexity. Residues 1337–1420 (MIELEKGHSG…KVKIIFIRNA (84 aa)) enclose the PDZ 8 domain. Positions 1433–1454 (AADPLPSTSESPQNKEVEPSIT) are disordered. The PDZ 9 domain occupies 1470–1551 (HLELPKDQGG…TVKLTVGAEN (82 aa)). The segment at 1560–1594 (AAVTASGERKDSSQTPAVPAPDLEPIPSTSRSSTP) is disordered. 2 PDZ domains span residues 1613–1696 (TIEI…YRDE) and 1709–1791 (TVEL…GRIK). The interval 1795 to 1834 (FHSERRPSQSSQVSESSLSSFSLPRSGIHTSESSESSAKK) is disordered. 2 positions are modified to phosphoserine: Ser-1802 and Ser-1808. Over residues 1802-1834 (SQSSQVSESSLSSFSLPRSGIHTSESSESSAKK) the composition is skewed to low complexity. PDZ domains follow at residues 1846–1932 (TVEI…VAGG) and 1971–2054 (TITL…MVLS).

Interacts with F11R/JAM, CLDN1, NG2, CXADR, CRB1, MPP4 and PALS1, HTR2A, HTR2B, PLEKHA1/TAPP1 and PLEKHA2/TAPP2. Interacts with CXADR. Interacts with HTR2C, CLDN5, DLG4, GRIN1, SYNGAP1, CAMK2A and CAMK2B. Interacts with FAT4 (via cytoplasmic domain). Interacts with DLL1. In terms of tissue distribution, abundant in all cerebral cortical layers, especially the piriform cortex, the pyramidal cells of the CA1-CA3 subfields of the hippocampus, as well as the granular layer of the dentate gyrus. Detected in the internal granular layer and the mitral cell layer of the olfactory bulb; in the medial habenular nucleus; and in amygdaloid, thalamic, hypothalamic, and pontine nuclei. In the cerebellum, found at high levels in the granular layer. Detected in the lateral ventricle. Expression overlaps with 5-HT2C receptor expression in all regions of the brain including the choroid plexus, where 5-HT2C receptors are highly enriched.

It localises to the endomembrane system. The protein localises to the cell junction. The protein resides in the tight junction. It is found in the synapse. Its subcellular location is the apical cell membrane. It localises to the postsynaptic density. The protein localises to the cell projection. The protein resides in the dendrite. It is found in the synaptosome. In terms of biological role, member of the NMDAR signaling complex that may play a role in control of AMPAR potentiation and synaptic plasticity in excitatory synapses. Promotes clustering of HT2RC at the cell surface. This Rattus norvegicus (Rat) protein is Multiple PDZ domain protein (Mpdz).